Here is a 224-residue protein sequence, read N- to C-terminus: Uracil-DNA glycosylase (224 aa).

The active-site Proton acceptor is the Asp64.

It belongs to the uracil-DNA glycosylase (UDG) superfamily. UNG family.

It localises to the cytoplasm. The catalysed reaction is Hydrolyzes single-stranded DNA or mismatched double-stranded DNA and polynucleotides, releasing free uracil.. Its function is as follows. Excises uracil residues from the DNA which can arise as a result of misincorporation of dUMP residues by DNA polymerase or due to deamination of cytosine. The polypeptide is Uracil-DNA glycosylase (Clostridioides difficile (strain 630) (Peptoclostridium difficile)).